The chain runs to 607 residues: UvrABC system protein C (607 aa).

One can recognise a GIY-YIG domain in the interval 29–106 (DKPGVYLMKD…IKKHNPKYNI (78 aa)). The region spanning 211-246 (GAILKALEKKMKEASENLEFERAKEYRDLMEDLKKV) is the UVR domain.

This sequence belongs to the UvrC family. In terms of assembly, interacts with UvrB in an incision complex.

The protein resides in the cytoplasm. Functionally, the UvrABC repair system catalyzes the recognition and processing of DNA lesions. UvrC both incises the 5' and 3' sides of the lesion. The N-terminal half is responsible for the 3' incision and the C-terminal half is responsible for the 5' incision. The protein is UvrABC system protein C of Desulfitobacterium hafniense (strain Y51).